We begin with the raw amino-acid sequence, 310 residues long: UDP-N-acetylenolpyruvoylglucosamine reductase (310 aa).

The region spanning 35 to 199 (VGGPAQALFT…TSARFRGTPA (165 aa)) is the FAD-binding PCMH-type domain. Arg179 is a catalytic residue. Ser228 serves as the catalytic Proton donor. Glu298 is an active-site residue.

This sequence belongs to the MurB family. It depends on FAD as a cofactor.

It localises to the cytoplasm. It carries out the reaction UDP-N-acetyl-alpha-D-muramate + NADP(+) = UDP-N-acetyl-3-O-(1-carboxyvinyl)-alpha-D-glucosamine + NADPH + H(+). It functions in the pathway cell wall biogenesis; peptidoglycan biosynthesis. In terms of biological role, cell wall formation. The protein is UDP-N-acetylenolpyruvoylglucosamine reductase of Rhodopseudomonas palustris (strain BisB5).